We begin with the raw amino-acid sequence, 373 residues long: L-threonine 3-dehydrogenase, mitochondrial (373 aa).

Residues 62-67 (GGLGQL), 88-90 (DIR), 106-107 (DI), Tyr-195, Lys-199, and Ile-225 contribute to the NAD(+) site. The active-site Proton donor/acceptor is Tyr-195.

It belongs to the NAD(P)-dependent epimerase/dehydratase family. Homodimer.

The protein localises to the mitochondrion. The enzyme catalyses L-threonine + NAD(+) = (2S)-2-amino-3-oxobutanoate + NADH + H(+). Its pathway is amino-acid degradation; L-threonine degradation via oxydo-reductase pathway; glycine from L-threonine: step 1/2. In terms of biological role, catalyzes the NAD(+)-dependent oxidation of L-threonine to 2-amino-3-ketobutyrate, mediating L-threonine catabolism. The sequence is that of L-threonine 3-dehydrogenase, mitochondrial from Bos taurus (Bovine).